Reading from the N-terminus, the 323-residue chain is Phospho-N-acetylmuramoyl-pentapeptide-transferase (323 aa).

9 helical membrane-spanning segments follow: residues 3 to 23 (NILL…PALI), 52 to 72 (MGGL…SWVL), 77 to 97 (MLPT…LGMW), 121 to 141 (IVGA…MALH), 145 to 165 (IGNW…LVGF), 175 to 195 (LDGL…IVAW), 200 to 220 (INIA…LIFN), 226 to 248 (IFMG…ILLH), and 301 to 321 (IDLT…WVIL).

This sequence belongs to the glycosyltransferase 4 family. MraY subfamily. It depends on Mg(2+) as a cofactor.

The protein resides in the cell membrane. It catalyses the reaction UDP-N-acetyl-alpha-D-muramoyl-L-alanyl-gamma-D-glutamyl-L-lysyl-D-alanyl-D-alanine + di-trans,octa-cis-undecaprenyl phosphate = Mur2Ac(oyl-L-Ala-gamma-D-Glu-L-Lys-D-Ala-D-Ala)-di-trans,octa-cis-undecaprenyl diphosphate + UMP. It functions in the pathway cell wall biogenesis; peptidoglycan biosynthesis. Its function is as follows. Catalyzes the initial step of the lipid cycle reactions in the biosynthesis of the cell wall peptidoglycan: transfers peptidoglycan precursor phospho-MurNAc-pentapeptide from UDP-MurNAc-pentapeptide onto the lipid carrier undecaprenyl phosphate, yielding undecaprenyl-pyrophosphoryl-MurNAc-pentapeptide, known as lipid I. This chain is Phospho-N-acetylmuramoyl-pentapeptide-transferase, found in Levilactobacillus brevis (strain ATCC 367 / BCRC 12310 / CIP 105137 / JCM 1170 / LMG 11437 / NCIMB 947 / NCTC 947) (Lactobacillus brevis).